The following is a 215-amino-acid chain: Pyrrolidone-carboxylate peptidase (215 aa).

Residues Glu78, Cys141, and His165 contribute to the active site.

This sequence belongs to the peptidase C15 family. In terms of assembly, homotetramer.

The protein resides in the cytoplasm. It carries out the reaction Release of an N-terminal pyroglutamyl group from a polypeptide, the second amino acid generally not being Pro.. Removes 5-oxoproline from various penultimate amino acid residues except L-proline. In Streptococcus pyogenes serotype M12 (strain MGAS2096), this protein is Pyrrolidone-carboxylate peptidase.